The chain runs to 207 residues: Vexin (207 aa).

Residues 55 to 102 (LELLPHRGDRRDPGDGRRFGRLQTARPPTAHPAKASARPVGISEPKTS) form a disordered region. Residues 58–72 (LPHRGDRRDPGDGRR) are compositionally biased toward basic and acidic residues.

It belongs to the vexin family.

Its subcellular location is the cell membrane. It is found in the nucleus. In terms of biological role, required for neurogenesis in the neural plate and retina. Strongly cooperates with neural bHLH factors to promote neurogenesis. The chain is Vexin from Pongo abelii (Sumatran orangutan).